An 82-amino-acid polypeptide reads, in one-letter code: Small ribosomal subunit protein eS27 (82 aa).

The Zn(2+) site is built by Cys-37, Cys-40, Cys-56, and Cys-59.

This sequence belongs to the eukaryotic ribosomal protein eS27 family. In terms of assembly, component of the small ribosomal subunit. Mature ribosomes consist of a small (40S) and a large (60S) subunit. The 40S subunit contains about 32 different proteins and 1 molecule of RNA (18S). The 60S subunit contains 45 different proteins and 3 molecules of RNA (25S, 5.8S and 5S). It depends on Zn(2+) as a cofactor.

Its subcellular location is the cytoplasm. In terms of biological role, component of the ribosome, a large ribonucleoprotein complex responsible for the synthesis of proteins in the cell. The small ribosomal subunit (SSU) binds messenger RNAs (mRNAs) and translates the encoded message by selecting cognate aminoacyl-transfer RNA (tRNA) molecules. The large subunit (LSU) contains the ribosomal catalytic site termed the peptidyl transferase center (PTC), which catalyzes the formation of peptide bonds, thereby polymerizing the amino acids delivered by tRNAs into a polypeptide chain. The nascent polypeptides leave the ribosome through a tunnel in the LSU and interact with protein factors that function in enzymatic processing, targeting, and the membrane insertion of nascent chains at the exit of the ribosomal tunnel. The polypeptide is Small ribosomal subunit protein eS27 (RPS27) (Candida albicans (strain SC5314 / ATCC MYA-2876) (Yeast)).